We begin with the raw amino-acid sequence, 374 residues long: Ribosomal RNA large subunit methyltransferase G (374 aa).

The protein belongs to the methyltransferase superfamily. RlmG family.

It localises to the cytoplasm. It catalyses the reaction guanosine(1835) in 23S rRNA + S-adenosyl-L-methionine = N(2)-methylguanosine(1835) in 23S rRNA + S-adenosyl-L-homocysteine + H(+). In terms of biological role, specifically methylates the guanine in position 1835 (m2G1835) of 23S rRNA. The polypeptide is Ribosomal RNA large subunit methyltransferase G (Pseudomonas savastanoi pv. phaseolicola (strain 1448A / Race 6) (Pseudomonas syringae pv. phaseolicola (strain 1448A / Race 6))).